A 424-amino-acid polypeptide reads, in one-letter code: Serine--tRNA ligase (424 aa).

231–233 (TAE) contributes to the L-serine binding site. 262-264 (RSE) serves as a coordination point for ATP. Glutamate 285 is a binding site for L-serine. 349 to 352 (EISS) contributes to the ATP binding site. Serine 385 contacts L-serine.

Belongs to the class-II aminoacyl-tRNA synthetase family. Type-1 seryl-tRNA synthetase subfamily. Homodimer. The tRNA molecule binds across the dimer.

Its subcellular location is the cytoplasm. It catalyses the reaction tRNA(Ser) + L-serine + ATP = L-seryl-tRNA(Ser) + AMP + diphosphate + H(+). The catalysed reaction is tRNA(Sec) + L-serine + ATP = L-seryl-tRNA(Sec) + AMP + diphosphate + H(+). It participates in aminoacyl-tRNA biosynthesis; selenocysteinyl-tRNA(Sec) biosynthesis; L-seryl-tRNA(Sec) from L-serine and tRNA(Sec): step 1/1. Catalyzes the attachment of serine to tRNA(Ser). Is also able to aminoacylate tRNA(Sec) with serine, to form the misacylated tRNA L-seryl-tRNA(Sec), which will be further converted into selenocysteinyl-tRNA(Sec). This Bacillus pumilus (strain SAFR-032) protein is Serine--tRNA ligase.